An 84-amino-acid polypeptide reads, in one-letter code: Anthracycline acyl carrier protein DpsG (84 aa).

The Carrier domain occupies 3-80; the sequence is ELSLAELREI…SMLIFVNERL (78 aa). Residue serine 40 is modified to O-(pantetheine 4'-phosphoryl)serine.

It participates in antibiotic biosynthesis; daunorubicin biosynthesis. It functions in the pathway antibiotic biosynthesis; carminomycin biosynthesis. The protein operates within antibiotic biosynthesis; rhodomycin biosynthesis. Its pathway is antibiotic biosynthesis; aclacinomycin biosynthesis. Involved in the biosynthesis of aklanonate which is an important precursor common to the formation of the clinically significant anthracyclines such as carminomycin, daunorubicin (daunomycin), rhodomycin, aclacinomycin T (aklavin) and aclacinomycin A (aclarubicin). These compounds are aromatic polyketide antibiotics that exhibit high cytotoxicity and are widely applied in the chemotherapy of a variety of cancers. The protein is Anthracycline acyl carrier protein DpsG (dpsG) of Streptomyces peucetius.